Here is a 250-residue protein sequence, read N- to C-terminus: MSNDPTHQFQIHKIVPIEIGGIDFSFTNASLFMVATVACAAGFLYFATSNRGLIPGRAQSVAEMSYEFVASMLREGAGSHGMKFFPMVFSLFMFVLTANLLGMMPYFFTITSQIVVTFALAIFVIGTVLVYGFYKHGLGFLNLFVPSGVPGALLLLVVPIEVISFLSRPISLSIRLFANMLAGHITLKVFAGFVASLGSLGALGVGGALLPLAMTVALTGLEFLVAFLQAYVFAVLTCMYLNDAIHPGGH.

The next 6 helical transmembrane spans lie at 29–49 (ASLF…FATS), 84–104 (FFPM…LGMM), 114–134 (IVVT…YGFY), 143–163 (LFVP…IEVI), 189–209 (VFAG…GGAL), and 216–236 (VALT…FAVL).

Belongs to the ATPase A chain family. As to quaternary structure, F-type ATPases have 2 components, CF(1) - the catalytic core - and CF(0) - the membrane proton channel. CF(1) has five subunits: alpha(3), beta(3), gamma(1), delta(1), epsilon(1). CF(0) has three main subunits: a(1), b(2) and c(9-12). The alpha and beta chains form an alternating ring which encloses part of the gamma chain. CF(1) is attached to CF(0) by a central stalk formed by the gamma and epsilon chains, while a peripheral stalk is formed by the delta and b chains.

It is found in the cell inner membrane. Its function is as follows. Key component of the proton channel; it plays a direct role in the translocation of protons across the membrane. The protein is ATP synthase subunit a of Allorhizobium ampelinum (strain ATCC BAA-846 / DSM 112012 / S4) (Agrobacterium vitis (strain S4)).